A 467-amino-acid polypeptide reads, in one-letter code: ATP synthase subunit beta (467 aa).

ATP is bound at residue 156-163 (GGAGVGKT).

Belongs to the ATPase alpha/beta chains family. F-type ATPases have 2 components, CF(1) - the catalytic core - and CF(0) - the membrane proton channel. CF(1) has five subunits: alpha(3), beta(3), gamma(1), delta(1), epsilon(1). CF(0) has three main subunits: a(1), b(2) and c(9-12). The alpha and beta chains form an alternating ring which encloses part of the gamma chain. CF(1) is attached to CF(0) by a central stalk formed by the gamma and epsilon chains, while a peripheral stalk is formed by the delta and b chains.

It localises to the cell inner membrane. The catalysed reaction is ATP + H2O + 4 H(+)(in) = ADP + phosphate + 5 H(+)(out). Produces ATP from ADP in the presence of a proton gradient across the membrane. The catalytic sites are hosted primarily by the beta subunits. The polypeptide is ATP synthase subunit beta (Cupriavidus necator (strain ATCC 17699 / DSM 428 / KCTC 22496 / NCIMB 10442 / H16 / Stanier 337) (Ralstonia eutropha)).